Reading from the N-terminus, the 80-residue chain is Putative membrane protein insertion efficiency factor (80 aa).

Residues 60–80 (SKTGKDPVPDRFSLKRNQEGE) are disordered. Residues 62-80 (TGKDPVPDRFSLKRNQEGE) are compositionally biased toward basic and acidic residues.

The protein belongs to the UPF0161 family.

The protein resides in the cell membrane. Could be involved in insertion of integral membrane proteins into the membrane. In Streptococcus pneumoniae serotype 4 (strain ATCC BAA-334 / TIGR4), this protein is Putative membrane protein insertion efficiency factor.